The sequence spans 134 residues: Small ribosomal subunit protein uS11 (134 aa).

Belongs to the universal ribosomal protein uS11 family. As to quaternary structure, part of the 30S ribosomal subunit. Interacts with proteins S7 and S18. Binds to IF-3.

In terms of biological role, located on the platform of the 30S subunit, it bridges several disparate RNA helices of the 16S rRNA. Forms part of the Shine-Dalgarno cleft in the 70S ribosome. This Polaromonas naphthalenivorans (strain CJ2) protein is Small ribosomal subunit protein uS11.